The chain runs to 454 residues: Serine/threonine-protein phosphatase C23G10.1 (454 aa).

The Mn(2+) site is built by aspartate 196, histidine 198, aspartate 224, and asparagine 256. Histidine 257 (proton donor) is an active-site residue. Mn(2+) is bound by residues histidine 308 and histidine 382.

It belongs to the PPP phosphatase family. PP-1 subfamily. Mn(2+) serves as cofactor.

The catalysed reaction is O-phospho-L-seryl-[protein] + H2O = L-seryl-[protein] + phosphate. It carries out the reaction O-phospho-L-threonyl-[protein] + H2O = L-threonyl-[protein] + phosphate. In Caenorhabditis elegans, this protein is Serine/threonine-protein phosphatase C23G10.1.